Consider the following 1068-residue polypeptide: MLVGSQSFSPGGPNGIIRSQSFAGFSGLQERRSRCNSFIENSSALKKPQAKLKKMHNLGHKNNNPPKEPQPKRVEEVYRALKNGLDEYLEVHQTELDKLTAQLKDMKRNSRLGVLYDLDKQIKTIERYMRRLEFHISKVDELYEAYCIQRRLQDGASKMKQAFATSPASKAARESLTEINRSFKEYTENMCTIEVELENLLGEFSIKMKGLAGFARLCPGDQYEIFMKYGRQRWKLKGKIEVNGKQSWDGEETVFLPLIVGFISIKVTELKGLATHILVGSVTCETKELFAARPQVVAVDINDLGTIKLNLEITWYPFDVEDMTASSGAGNKAAALQRRMSMYSQGTPETPTFKDHSFFRWLHPSPDKPRRLSVLSALQDTFFAKLHRSRSFSDLPSLRPSPKAVLELYSNLPDDIFENGKAAEEKMPLSLSFSDLPNGDCALTSHSTGSPSNSTNPEITITPAEFNLSSLASQNEGMDDTSSASSRNSLGEGQEPKSHLKEEDPEEPRKPASAPSEACRRQSSGAGAEHLFLENDVAEALLQESEEASELKPVELDTSEGNITKQLVKRLTSAEVPMATDRLLSEGSVGGESEGCRSFLDGSLEDAFNGLLLALEPHKEQYKEFQDLNQEVMNLDDILKCKPAVSRSRSSSLSLTVESALESFDFLNTSDFDEEEDGDEVCNVGGGADSVFSDTETEKHSYRSVHPEARGHLSEALTEDTGVGTSVAGSPLPLTTGNESLDITIVRHLQYCTQLVQQIVFSSKTPFVARSLLEKLSRQIQVMEKLAAVSDENIGNISSVVEAIPEFHKKLSLLSFWTKCCSPVGVYHSPADRVMKQLEASFARTVNKEYPGLADPVFRTLVSQILDRAEPLLSSSLSSEVVTVFQYYSYFTSHGVSDLESYLSQLARQVSMVQTLQSLRDEKLLQTMSDLAPSNLLAQQEVLRTLALLLTREDNEVSEAVTLYLAAASKNQHFREKALLYYCEALTKTNLQLQKAACLALKILEATESIKMLVTLCQSDTEEIRNVASETLLSLGEDGRLAYEQLDKFPRDCVKVGGRHGTEVATAF.

Serine 21 and serine 37 each carry phosphoserine; in isoform. Positions 45–73 are disordered; sequence LKKPQAKLKKMHNLGHKNNNPPKEPQPKR. Over residues 48–59 the composition is skewed to basic residues; sequence PQAKLKKMHNLG. The segment at 55–113 is involved in cell filopodia formation; that stretch reads MHNLGHKNNNPPKEPQPKRVEEVYRALKNGLDEYLEVHQTELDKLTAQLKDMKRNSRLG. The stretch at 83-112 forms a coiled coil; that stretch reads NGLDEYLEVHQTELDKLTAQLKDMKRNSRL. Serine 341 is subject to Phosphoserine; in isoform 2. Over residues 474–491 the composition is skewed to polar residues; that stretch reads QNEGMDDTSSASSRNSLG. Residues 474–524 are disordered; sequence QNEGMDDTSSASSRNSLGEGQEPKSHLKEEDPEEPRKPASAPSEACRRQSS. Positions 494 to 510 are enriched in basic and acidic residues; that stretch reads QEPKSHLKEEDPEEPRK. Serine 523 is subject to Phosphoserine; in isoform 2. Position 573 is a phosphoserine (serine 573). At serine 585 the chain carries Phosphoserine; in isoform 2. Positions 768 to 793 form a coiled coil; it reads VARSLLEKLSRQIQVMEKLAAVSDEN.

Belongs to the RIPOR family. In terms of assembly, homooligomer; homooligomerization is regulated by RHOC and leads to the formation of concatemers through the association of N- and C-termini. Interacts with 14-3-3 proteins; these interactions occur during myogenic cell differentiation. Interacts with HDAC6; this interaction occurs during early myogenic differentiation and prevents HDAC6 to deacetylate tubulin. Interacts with DYSF; this interaction occurs during early myogenic differentiation. Interacts with MYOF. Interacts with RHOC. Isoform 1 and isoform 2 interact (via active GTP- or inactive GDP-bound forms) with RHOA; these interactions are direct, block the loading of GTP to RHOA and decrease upon chemokine CCL19 stimulation in primary T lymphocytes. Isoform 2 interacts (phosphorylated form) with HDAC6; this interaction induces T cell proliferation arrest. Isoform 2 interacts (phosphorylated form) with 14-3-3 proteins; these interactions induces T cell proliferation arrest. Isoform 2 interacts with 14-3-3 proteins. Isoform 2 interacts (via phosphorylated form) with YWHAB; this interaction occurs in a chemokine-dependent manner and does not compete for binding of RIPOR2 with RHOA nor blocks inhibition of RIPOR2-mediated RHOA activity. Isoform 2 interacts with YWHAE. Isoform 2 interacts with YWHAQ. Phosphorylated. Isoform 2 is phosphorylated in T cells. Chemokine-induced phosphorylation of isoform 2 in neutrophils occurs in a PKC- and AKT-dependent manner, resulting in RIPOR2 interaction with YWHAB and stabilization. Isoform 2 is phosphorylated by PKCA, AKT1 and MAPKAPK1A; in vitro. Post-translationally, acetylated during myogenic differentiation. Expressed in primary fetal mononuclear myoblast. Expressed strongly in naive T lymphocytes. Expressed weakly in activated T lymphocytes (at protein level). Expressed in blood cells and adult tissues of hematopoietic origin, such as the secondary lymphoid organs. Expressed in cytotrophoblast.

It localises to the cytoplasm. The protein resides in the cytoskeleton. The protein localises to the cell projection. Its subcellular location is the filopodium. It is found in the stereocilium. It localises to the stereocilium membrane. The protein resides in the apical cell membrane. Its function is as follows. Acts as an inhibitor of the small GTPase RHOA and plays several roles in the regulation of myoblast and hair cell differentiation, lymphocyte T proliferation and neutrophil polarization. Inhibits chemokine-induced T lymphocyte responses, such as cell adhesion, polarization and migration. Involved also in the regulation of neutrophil polarization, chemotaxis and adhesion. Required for normal development of inner and outer hair cell stereocilia within the cochlea of the inner ear. Plays a role for maintaining the structural organization of the basal domain of stereocilia. Involved in mechanosensory hair cell function. Required for normal hearing. Functionally, acts as an inhibitor of the small GTPase RHOA. Plays a role in fetal mononuclear myoblast differentiation by promoting filopodia and myotube formation. Maintains naive T lymphocytes in a quiescent state. This chain is Rho family-interacting cell polarization regulator 2 (RIPOR2), found in Homo sapiens (Human).